The primary structure comprises 269 residues: Ribonuclease HII (269 aa).

An RNase H type-2 domain is found at Arg-61–Glu-250. Residues Asp-67, Glu-68, and Asp-158 each contribute to the a divalent metal cation site.

This sequence belongs to the RNase HII family. Mn(2+) serves as cofactor. Mg(2+) is required as a cofactor.

The protein resides in the cytoplasm. It carries out the reaction Endonucleolytic cleavage to 5'-phosphomonoester.. Endonuclease that specifically degrades the RNA of RNA-DNA hybrids. In Parvibaculum lavamentivorans (strain DS-1 / DSM 13023 / NCIMB 13966), this protein is Ribonuclease HII.